A 106-amino-acid chain; its full sequence is Nucleoid-associated protein Rpal_0620 (106 aa).

The protein belongs to the YbaB/EbfC family. In terms of assembly, homodimer.

It localises to the cytoplasm. Its subcellular location is the nucleoid. Its function is as follows. Binds to DNA and alters its conformation. May be involved in regulation of gene expression, nucleoid organization and DNA protection. This chain is Nucleoid-associated protein Rpal_0620, found in Rhodopseudomonas palustris (strain TIE-1).